The chain runs to 203 residues: ADP-ribosylation factor-like protein 6-interacting protein 1 (203 aa).

Over 1-41 (MAEGDNRSSNLLAAETASLEEQLQGWGEVMLMADKVLRWER) the chain is Cytoplasmic. A helical transmembrane segment spans residues 42–62 (AWFPPAIMGVVSLVFLIIYYL). The Lumenal portion of the chain corresponds to 63 to 65 (DPS). A helical transmembrane segment spans residues 66–86 (VLSGVSCFVMFLCLADYLVPI). The Cytoplasmic portion of the chain corresponds to 87 to 133 (LAPRIFGSNKWTTEQQQRFHEICSNLVKTRRRAVGWWKRLFTLKEEK). Residues 134 to 175 (PKMYFMTMIVSLAAVAWVGQQVHNLLLTYLIVTSLLLLPGLN) form a helical membrane-spanning segment. Residues 176-203 (QHGIISKYIGMAKREINKLLKQKEKKNE) lie on the Lumenal side of the membrane.

Belongs to the ARL6ip family. Homooligomer. Heterodimer with ARL6IP5. Interacts with ATL1, TMEM33 and ARL6.

The protein localises to the endomembrane system. It is found in the endoplasmic reticulum membrane. The protein resides in the endoplasmic reticulum. Positively regulates SLC1A1/EAAC1-mediated glutamate transport by increasing its affinity for glutamate in a PKC activity-dependent manner. Promotes the catalytic efficiency of SLC1A1/EAAC1 probably by reducing its interaction with ARL6IP5, a negative regulator of SLC1A1/EAAC1-mediated glutamate transport. Plays a role in the formation and stabilization of endoplasmic reticulum tubules. Negatively regulates apoptosis, possibly by modulating the activity of caspase-9 (CASP9). Inhibits cleavage of CASP9-dependent substrates and downstream markers of apoptosis but not CASP9 itself. May be involved in protein transport, membrane trafficking, or cell signaling during hematopoietic maturation. The chain is ADP-ribosylation factor-like protein 6-interacting protein 1 (ARL6IP1) from Pongo abelii (Sumatran orangutan).